The sequence spans 282 residues: 4-hydroxy-3-methylbut-2-enyl diphosphate reductase (282 aa).

Cys-14 lines the [4Fe-4S] cluster pocket. Positions 43 and 78 each coordinate (2E)-4-hydroxy-3-methylbut-2-enyl diphosphate. Positions 43 and 78 each coordinate dimethylallyl diphosphate. Positions 43 and 78 each coordinate isopentenyl diphosphate. Cys-100 is a [4Fe-4S] cluster binding site. His-128 provides a ligand contact to (2E)-4-hydroxy-3-methylbut-2-enyl diphosphate. A dimethylallyl diphosphate-binding site is contributed by His-128. An isopentenyl diphosphate-binding site is contributed by His-128. Glu-130 serves as the catalytic Proton donor. Thr-164 provides a ligand contact to (2E)-4-hydroxy-3-methylbut-2-enyl diphosphate. Cys-192 is a [4Fe-4S] cluster binding site. 4 residues coordinate (2E)-4-hydroxy-3-methylbut-2-enyl diphosphate: Ser-220, Ser-221, Asn-222, and Ser-266. Dimethylallyl diphosphate contacts are provided by Ser-220, Ser-221, Asn-222, and Ser-266. Isopentenyl diphosphate is bound by residues Ser-220, Ser-221, Asn-222, and Ser-266.

It belongs to the IspH family. It depends on [4Fe-4S] cluster as a cofactor.

The catalysed reaction is isopentenyl diphosphate + 2 oxidized [2Fe-2S]-[ferredoxin] + H2O = (2E)-4-hydroxy-3-methylbut-2-enyl diphosphate + 2 reduced [2Fe-2S]-[ferredoxin] + 2 H(+). It carries out the reaction dimethylallyl diphosphate + 2 oxidized [2Fe-2S]-[ferredoxin] + H2O = (2E)-4-hydroxy-3-methylbut-2-enyl diphosphate + 2 reduced [2Fe-2S]-[ferredoxin] + 2 H(+). It functions in the pathway isoprenoid biosynthesis; dimethylallyl diphosphate biosynthesis; dimethylallyl diphosphate from (2E)-4-hydroxy-3-methylbutenyl diphosphate: step 1/1. The protein operates within isoprenoid biosynthesis; isopentenyl diphosphate biosynthesis via DXP pathway; isopentenyl diphosphate from 1-deoxy-D-xylulose 5-phosphate: step 6/6. Catalyzes the conversion of 1-hydroxy-2-methyl-2-(E)-butenyl 4-diphosphate (HMBPP) into a mixture of isopentenyl diphosphate (IPP) and dimethylallyl diphosphate (DMAPP). Acts in the terminal step of the DOXP/MEP pathway for isoprenoid precursor biosynthesis. This chain is 4-hydroxy-3-methylbut-2-enyl diphosphate reductase, found in Clostridium perfringens (strain 13 / Type A).